Consider the following 209-residue polypeptide: Large ribosomal subunit protein uL3 (209 aa).

Position 150 is an N5-methylglutamine (Q150).

The protein belongs to the universal ribosomal protein uL3 family. As to quaternary structure, part of the 50S ribosomal subunit. Forms a cluster with proteins L14 and L19. In terms of processing, methylated by PrmB.

One of the primary rRNA binding proteins, it binds directly near the 3'-end of the 23S rRNA, where it nucleates assembly of the 50S subunit. The sequence is that of Large ribosomal subunit protein uL3 from Aliivibrio fischeri (strain MJ11) (Vibrio fischeri).